The following is a 577-amino-acid chain: 2-succinyl-5-enolpyruvyl-6-hydroxy-3-cyclohexene-1-carboxylate synthase (577 aa).

Belongs to the TPP enzyme family. MenD subfamily. In terms of assembly, homodimer. Requires Mg(2+) as cofactor. The cofactor is Mn(2+). Thiamine diphosphate serves as cofactor.

The enzyme catalyses isochorismate + 2-oxoglutarate + H(+) = 5-enolpyruvoyl-6-hydroxy-2-succinyl-cyclohex-3-ene-1-carboxylate + CO2. Its pathway is quinol/quinone metabolism; 1,4-dihydroxy-2-naphthoate biosynthesis; 1,4-dihydroxy-2-naphthoate from chorismate: step 2/7. The protein operates within quinol/quinone metabolism; menaquinone biosynthesis. Functionally, catalyzes the thiamine diphosphate-dependent decarboxylation of 2-oxoglutarate and the subsequent addition of the resulting succinic semialdehyde-thiamine pyrophosphate anion to isochorismate to yield 2-succinyl-5-enolpyruvyl-6-hydroxy-3-cyclohexene-1-carboxylate (SEPHCHC). This is 2-succinyl-5-enolpyruvyl-6-hydroxy-3-cyclohexene-1-carboxylate synthase from Christiangramia forsetii (strain DSM 17595 / CGMCC 1.15422 / KT0803) (Gramella forsetii).